The chain runs to 93 residues: Acylphosphatase (93 aa).

Positions 7-93 (RAHVFVSGTV…EGIDGFHIRR (87 aa)) constitute an Acylphosphatase-like domain. Active-site residues include Arg-22 and Asn-40.

The protein belongs to the acylphosphatase family.

It catalyses the reaction an acyl phosphate + H2O = a carboxylate + phosphate + H(+). The chain is Acylphosphatase (acyP) from Haloquadratum walsbyi (strain DSM 16790 / HBSQ001).